The primary structure comprises 570 residues: Urease subunit alpha (570 aa).

The 440-residue stretch at 131–570 (GGFDAHIHFI…LPMAQRYFLF (440 aa)) folds into the Urease domain. Positions 136, 138, and 219 each coordinate Ni(2+). K219 carries the N6-carboxylysine modification. Position 221 (H221) interacts with substrate. Residues H248 and H274 each coordinate Ni(2+). The active-site Proton donor is the H322. D362 is a Ni(2+) binding site.

It belongs to the metallo-dependent hydrolases superfamily. Urease alpha subunit family. Heterotrimer of UreA (gamma), UreB (beta) and UreC (alpha) subunits. Three heterotrimers associate to form the active enzyme. Requires Ni cation as cofactor. Post-translationally, carboxylation allows a single lysine to coordinate two nickel ions.

Its subcellular location is the cytoplasm. The enzyme catalyses urea + 2 H2O + H(+) = hydrogencarbonate + 2 NH4(+). Its pathway is nitrogen metabolism; urea degradation; CO(2) and NH(3) from urea (urease route): step 1/1. This chain is Urease subunit alpha, found in Chelativorans sp. (strain BNC1).